Consider the following 452-residue polypeptide: Trigger factor (452 aa).

The region spanning 171–256 is the PPIase FKBP-type domain; it reads GDRVTISFKG…ATKVEAPQDT (86 aa).

The protein belongs to the FKBP-type PPIase family. Tig subfamily.

The protein localises to the cytoplasm. The enzyme catalyses [protein]-peptidylproline (omega=180) = [protein]-peptidylproline (omega=0). Involved in protein export. Acts as a chaperone by maintaining the newly synthesized protein in an open conformation. Functions as a peptidyl-prolyl cis-trans isomerase. This is Trigger factor from Rhodopseudomonas palustris (strain HaA2).